Here is a 432-residue protein sequence, read N- to C-terminus: GRAM domain-containing protein 2B (432 aa).

Met-1 bears the N-acetylmethionine mark. Disordered stretches follow at residues 1-61 and 74-106; these read MTEL…SPDQ and DGAS…SSQY. Composition is skewed to basic and acidic residues over residues 9-39 and 81-99; these read EDTK…EEKK and DKND…ERKK. Positions 110–177 constitute a GRAM domain; that stretch reads MHFHKLFLSV…FSVTLIKKTK (68 aa). The segment covering 220-233 has biased composition (polar residues); that stretch reads TSVGNSPNPSSAEN. Residues 220 to 239 are disordered; it reads TSVGNSPNPSSAENSFRADR. A phosphoserine mark is found at Ser-225, Ser-242, and Ser-252. Residues 262–285 are disordered; it reads RQDMEGYSSSGSQTPESENSRDFH. The segment covering 268 to 278 has biased composition (polar residues); the sequence is YSSSGSQTPES.

This Homo sapiens (Human) protein is GRAM domain-containing protein 2B (GRAMD2B).